Reading from the N-terminus, the 111-residue chain is FK506-binding protein 1 (111 aa).

The tract at residues 1–20 (MGVEKTIITQGSGPSPQVGQ) is disordered. Over residues 7 to 20 (IITQGSGPSPQVGQ) the composition is skewed to polar residues. Residues 19-111 (GQKVTMEYTG…IFDVELKKIG (93 aa)) enclose the PPIase FKBP-type domain.

Belongs to the FKBP-type PPIase family. FKBP1 subfamily.

The protein resides in the cytoplasm. The enzyme catalyses [protein]-peptidylproline (omega=180) = [protein]-peptidylproline (omega=0). With respect to regulation, inhibited by both FK506 and rapamycin. PPIases accelerate the folding of proteins. It catalyzes the cis-trans isomerization of proline imidic peptide bonds in oligopeptides. The protein is FK506-binding protein 1 (FPR1) of Gibberella zeae (strain ATCC MYA-4620 / CBS 123657 / FGSC 9075 / NRRL 31084 / PH-1) (Wheat head blight fungus).